Reading from the N-terminus, the 401-residue chain is MSSQSLHDCLRGRCLGVLRRMEIIGRFRYYFQHPWSRLLVSYLVTFFNFLIFAEDPVSHSQKEAHMSVVGNCFSFIISKYPAGFWSVLKVLLWVLAIICGLIAGKFIFHRRLFGRVLRLKMFREDHGSWMTMFFSTILSLFIFSHIYNLLLLMSVRMRPYMVTEYMGIRNESFMKMAAVGTWMGDFVTAWMVTDMMLQDTHYPDWGRTARHLWRQGHNRIVLFWTVLICLTSVVVLVISTDWIRWDNLNRGFLPSDEVSRAFLASFILVFDLLIVMQDWEFPHFMGDLDMNLPGLSTTQLKIRLPVCKRIFKEEYHIHITGKWFNYGIIFLVLILDLNMWKNQIFYKPYEYGQYVGPGEKIYTVEDPDTLQDFNRSMLTWEWRSTNIDPRTNQTFNQSNAI.

At 1-37 (MSSQSLHDCLRGRCLGVLRRMEIIGRFRYYFQHPWSR) the chain is on the cytoplasmic side. The chain crosses the membrane as a helical span at residues 38-58 (LLVSYLVTFFNFLIFAEDPVS). Topologically, residues 59 to 81 (HSQKEAHMSVVGNCFSFIISKYP) are extracellular. The helical transmembrane segment at 82 to 102 (AGFWSVLKVLLWVLAIICGLI) threads the bilayer. The Cytoplasmic segment spans residues 103-131 (AGKFIFHRRLFGRVLRLKMFREDHGSWMT). Residues 132–152 (MFFSTILSLFIFSHIYNLLLL) form a helical membrane-spanning segment. Residues 153–176 (MSVRMRPYMVTEYMGIRNESFMKM) are Extracellular-facing. N-linked (GlcNAc...) asparagine glycosylation occurs at N170. Residues 177 to 197 (AAVGTWMGDFVTAWMVTDMML) form a helical membrane-spanning segment. Topologically, residues 198–219 (QDTHYPDWGRTARHLWRQGHNR) are cytoplasmic. The helical transmembrane segment at 220–240 (IVLFWTVLICLTSVVVLVIST) threads the bilayer. The Extracellular segment spans residues 241–260 (DWIRWDNLNRGFLPSDEVSR). A helical transmembrane segment spans residues 261 to 281 (AFLASFILVFDLLIVMQDWEF). The Cytoplasmic portion of the chain corresponds to 282–316 (PHFMGDLDMNLPGLSTTQLKIRLPVCKRIFKEEYH). A helical transmembrane segment spans residues 317–337 (IHITGKWFNYGIIFLVLILDL). Residues 338-401 (NMWKNQIFYK…NQTFNQSNAI (64 aa)) are Extracellular-facing. Residues N374, N392, and N396 are each glycosylated (N-linked (GlcNAc...) asparagine).

Belongs to the TMEM117 family.

The protein resides in the cell membrane. Functionally, may be involved in endoplasmic reticulum (ER) stress-induced cell death pathway. This chain is Transmembrane protein 117 (tmem117), found in Danio rerio (Zebrafish).